A 303-amino-acid chain; its full sequence is HTH-type transcriptional regulator LysG (303 aa).

An HTH lysR-type domain is found at 6 to 62 (LDGPQLAALAAVVELGSFDAAAERLHVTPSAVSQRIKSLEQQVGQVLVVREKPCRAT). The segment at residues 23 to 42 (FDAAAERLHVTPSAVSQRIK) is a DNA-binding region (H-T-H motif).

Belongs to the LysR transcriptional regulatory family. Homodimer.

In terms of biological role, positively regulates the expression of the exporter LysE and represses its own expression. The sequence is that of HTH-type transcriptional regulator LysG from Mycobacterium bovis (strain ATCC BAA-935 / AF2122/97).